We begin with the raw amino-acid sequence, 253 residues long: Molybdate import ATP-binding protein MolC (253 aa).

An ABC transporter domain is found at 5–229 (LSVENLGFYY…NLTALFHLPM (225 aa)). Residue 38–45 (GQNGCGKS) coordinates ATP.

This sequence belongs to the ABC transporter superfamily. As to quaternary structure, the complex is composed of two ATP-binding proteins (MolC), two transmembrane proteins (MolB) and a solute-binding protein (MolA).

The protein resides in the cell inner membrane. The catalysed reaction is molybdate(out) + ATP + H2O = molybdate(in) + ADP + phosphate + H(+). Its activity is regulated as follows. The MolBCA complex shows a decrease in affinity in the presence of increasing concentrations of substrate and nucleotide. Its function is as follows. Part of the ABC transporter complex MolBCA involved in molybdate import. Responsible for energy coupling to the transport system. Functions as a low-affinity molybdate transporter. This Haemophilus influenzae (strain ATCC 51907 / DSM 11121 / KW20 / Rd) protein is Molybdate import ATP-binding protein MolC.